The primary structure comprises 153 residues: Protein SprT-like (153 aa).

A SprT-like domain is found at 7–145 (QTLVEKISIV…VCGKCHGRLS (139 aa)). His67 serves as a coordination point for Zn(2+). Residue Glu68 is part of the active site. His71 contacts Zn(2+).

Belongs to the SprT family. Requires Zn(2+) as cofactor.

The protein localises to the cytoplasm. The protein is Protein SprT-like of Enterococcus faecalis (strain ATCC 700802 / V583).